Reading from the N-terminus, the 908-residue chain is DNA mismatch repair protein MutS (908 aa).

An ATP-binding site is contributed by 629–636 (GPNMAGKS). Residues 822–863 (ADEADGAPSEDPPSEDPPSGDGVRAKKGEADAVPDLEDSQAN) are disordered.

It belongs to the DNA mismatch repair MutS family.

This protein is involved in the repair of mismatches in DNA. It is possible that it carries out the mismatch recognition step. This protein has a weak ATPase activity. The sequence is that of DNA mismatch repair protein MutS from Salinibacter ruber (strain DSM 13855 / M31).